Here is a 545-residue protein sequence, read N- to C-terminus: Endo-beta-N-acetylglucosaminidase (545 aa).

Residues 1–36 (MTFIKQMMPRYVASMTAGIVAAAMAATCAFAPVANA) form the signal peptide. One can recognise a GH18 domain in the interval 51–333 (RHFMVYYRAW…EDLRRIVPSN (283 aa)). Glu184 acts as the Proton donor in catalysis. Residues 486 to 511 (PVPTPDSTDQNGNRDKVTNHKVQGQP) are disordered. The helical transmembrane segment at 518-538 (GISTDIIVAVGVTLAIAGVAL) threads the bilayer.

The protein belongs to the glycosyl hydrolase 18 family.

The protein localises to the cell membrane. The enzyme catalyses an N(4)-(oligosaccharide-(1-&gt;3)-[oligosaccharide-(1-&gt;6)]-beta-D-Man-(1-&gt;4)-beta-D-GlcNAc-(1-&gt;4)-alpha-D-GlcNAc)-L-asparaginyl-[protein] + H2O = an oligosaccharide-(1-&gt;3)-[oligosaccharide-(1-&gt;6)]-beta-D-Man-(1-&gt;4)-D-GlcNAc + N(4)-(N-acetyl-beta-D-glucosaminyl)-L-asparaginyl-[protein]. Its function is as follows. Endoglycosidase with broad specificity that cleaves the chitobiose core of high mannose and complex N-linked glycans. Is able to release N-glycans from diverse host glycoproteins such as human and bovine lactoferrin, immunoglobulins A and G, and ribonuclease B. Is active directly on human breast milk - a complex matrix of lipids, oligosaccharides, and proteins with disparate glycosylation types - successfully removing a significant proportion of the total amount of N-glycans. Does not recognize O-linked glycans or free human milk oligosaccharides (HMO). The sequence is that of Endo-beta-N-acetylglucosaminidase from Bifidobacterium longum subsp. infantis (strain ATCC 15697 / DSM 20088 / JCM 1222 / NCTC 11817 / S12).